A 396-amino-acid chain; its full sequence is Elongation factor Tu (396 aa).

A tr-type G domain is found at 10–205 (KPHVNIGTIG…ACDESIPDPE (196 aa)). The interval 19-26 (GHVDHGKT) is G1. Position 19 to 26 (19 to 26 (GHVDHGKT)) interacts with GTP. Thr26 provides a ligand contact to Mg(2+). The G2 stretch occupies residues 62-66 (GITIN). Residues 83 to 86 (DAPG) form a G3 region. GTP-binding positions include 83-87 (DAPGH) and 138-141 (NKCD). Positions 138-141 (NKCD) are G4. Residues 175-177 (SAL) form a G5 region.

The protein belongs to the TRAFAC class translation factor GTPase superfamily. Classic translation factor GTPase family. EF-Tu/EF-1A subfamily. As to quaternary structure, monomer.

It is found in the cytoplasm. It carries out the reaction GTP + H2O = GDP + phosphate + H(+). GTP hydrolase that promotes the GTP-dependent binding of aminoacyl-tRNA to the A-site of ribosomes during protein biosynthesis. The chain is Elongation factor Tu from Corynebacterium jeikeium (strain K411).